Consider the following 427-residue polypeptide: MQNSRSTKLFQQALQSIPGGVNSPVRAFRSVGSDPLFIKKAAGPRIYDEDGNAFIDYVGSWGPMILGHCHPQVVSAIKAAVDNGASFGAPTELEITLAEMVIDAVPSIEMVRMVSSGTEATMSAIRLARGYTGRDNILKFSGCYHGHSDSLLVKAGSGAATFGVPDSPGVPADLAKHTLTATYNDLDSVRALVAANKGSIACIIVEPVAGNMGTVPPKEGFLEGLRSICSEEGIVLIFDEVMSGFRVAYGGVQELYGVTPDMTTLGKIIGGGLPVGAFGGKKEIMSLLSPAGGVYQAGTLSGNPLAMTAGIETLKLLKQPGFYQKLEEKSAFVAEGIAKAAKDAGFPIYSTRVGSMFCAFFSKDPVYDWDSAAKCDTKAFAAYFKAMLNEGIYLAPSQFETAFVGISHSTEDLEQTIAAAAKCFKAL.

At Lys-267 the chain carries N6-(pyridoxal phosphate)lysine.

This sequence belongs to the class-III pyridoxal-phosphate-dependent aminotransferase family. HemL subfamily. Homodimer. Pyridoxal 5'-phosphate serves as cofactor.

The protein resides in the cytoplasm. It carries out the reaction (S)-4-amino-5-oxopentanoate = 5-aminolevulinate. Its pathway is porphyrin-containing compound metabolism; protoporphyrin-IX biosynthesis; 5-aminolevulinate from L-glutamyl-tRNA(Glu): step 2/2. This is Glutamate-1-semialdehyde 2,1-aminomutase from Citrifermentans bemidjiense (strain ATCC BAA-1014 / DSM 16622 / JCM 12645 / Bem) (Geobacter bemidjiensis).